The chain runs to 311 residues: Beta-lactamase (311 aa).

The tat-type signal signal peptide spans 1–34 (MRLTQAPPSRRTLMTLGAGATMAALLPAGGAAYA). Serine 87 functions as the Acyl-ester intermediate in the catalytic mechanism. Residue 255–257 (KTG) participates in substrate binding.

It belongs to the class-A beta-lactamase family. Post-translationally, predicted to be exported by the Tat system. The position of the signal peptide cleavage has not been experimentally proven.

The catalysed reaction is a beta-lactam + H2O = a substituted beta-amino acid. The chain is Beta-lactamase (bla) from Kitasatospora aureofaciens (Streptomyces aureofaciens).